A 1497-amino-acid polypeptide reads, in one-letter code: Collagen alpha-1(XVII) chain (1497 aa).

Disordered stretches follow at residues 1–154 (MDVT…PSTR) and 167–186 (GSRS…LPIP). At 1 to 467 (MDVTKKNKRD…CGSCCSWWKW (467 aa)) the chain is on the cytoplasmic side. Positions 1–566 (MDVTKKNKRD…MMEQENGNLR (566 aa)) are nonhelical region (NC16). The segment covering 9 to 19 (RDGTEVTERIV) has biased composition (basic and acidic residues). Composition is skewed to polar residues over residues 57-96 (LTHG…SPGS) and 169-183 (RSAS…SNTL). The segment at 145–230 (RLQSASPSTR…WSSTLPAGSS (86 aa)) is necessary for interaction with DST and for the recruitment of DST to hemidesmosome. A helical; Signal-anchor for type II membrane protein transmembrane segment spans residues 468–488 (LLGLLLTWLLLLGLLFGLIAL). Residues 489–1497 (AEEVRKLKAR…RRRRSIAVKP (1009 aa)) lie on the Extracellular side of the membrane. The residue at position 544 (Ser544) is a Phosphoserine; by CK2. Disordered regions lie at residues 562-1011 (NGNL…SSSG), 1209-1234 (GLSF…VSGA), and 1261-1316 (SFIV…TGGG). The triple-helical region stretch occupies residues 567–1482 (GSPGPKGDMG…KGEKGDKGDQ (916 aa)). The segment covering 590–602 (PGIPGPLGHPGPQ) has biased composition (pro residues). 4 stretches are compositionally biased toward low complexity: residues 604–635 (PKGQ…RGEA), 661–673 (PGSV…SGSP), 735–748 (EPGA…AGPD), and 774–796 (DPGK…PGRP). 3 stretches are compositionally biased toward pro residues: residues 820-841 (PGPP…PGPA), 858-881 (PPGP…PRGP), and 907-916 (PPGPPGPPGP). Low complexity-rich tracts occupy residues 936 to 946 (GFSTSGSSSFG) and 968 to 987 (PGVP…GSSS). 3 stretches are compositionally biased toward pro residues: residues 994 to 1004 (PPGPPGPPGPP), 1214 to 1228 (PGPP…PRGP), and 1266 to 1275 (PPGPPGPQGP). Positions 1289 to 1312 (SRGSSSSSHSSSVRRGSSYSSSMS) are enriched in low complexity. An N-linked (GlcNAc...) asparagine glycan is attached at Asn1421. The segment at 1434 to 1497 (GAIQGPPGQK…RRRRSIAVKP (64 aa)) is disordered. A compositionally biased stretch (pro residues) spans 1458–1469 (AGPPGHPGPPGP). The segment covering 1472–1481 (HKGEKGDKGD) has biased composition (basic and acidic residues). The segment at 1483 to 1497 (VYAGRRRRRSIAVKP) is nonhelical region (NC1). Residues 1486-1497 (GRRRRRSIAVKP) are compositionally biased toward basic residues.

Homotrimers of alpha 1(XVII)chains. Interacts (via cytoplasmic region) with ITGB4 (via cytoplasmic region). Interacts (via cytoplasmic region) with DST isoform 3 (via N-terminus). Interacts (via N-terminus) with PLEC. Interacts (via cytoplasmic region) with DSP. Post-translationally, the intracellular/endo domain is disulfide-linked. In terms of processing, prolines at the third position of the tripeptide repeating unit (G-X-Y) are hydroxylated in some or all of the chains. The ectodomain is shedded from the surface of keratinocytes resulting in a 120-kDa soluble form, also named as 120 kDa linear IgA disease antigen. The shedding is mediated by membrane-bound metalloproteases. This cleavage is inhibited by phosphorylation at Ser-544. In terms of tissue distribution, detected in skin. In the cornea, it is detected in the epithelial basement membrane, the epithelial cells, and at a lower level in stromal cells (at protein level). Stratified squamous epithelia. Found in hemidesmosomes. Expressed in cornea, oral mucosa, esophagus, intestine, kidney collecting ducts, ureter, bladder, urethra and thymus but is absent in lung, blood vessels, skeletal muscle and nerves.

Its subcellular location is the cell junction. The protein localises to the hemidesmosome. It localises to the membrane. It is found in the secreted. The protein resides in the extracellular space. Its subcellular location is the extracellular matrix. The protein localises to the basement membrane. May play a role in the integrity of hemidesmosome and the attachment of basal keratinocytes to the underlying basement membrane. In terms of biological role, the 120 kDa linear IgA disease antigen is an anchoring filament component involved in dermal-epidermal cohesion. Is the target of linear IgA bullous dermatosis autoantibodies. This chain is Collagen alpha-1(XVII) chain (COL17A1), found in Homo sapiens (Human).